A 504-amino-acid polypeptide reads, in one-letter code: Glycerol kinase (504 aa).

Residue Thr-12 participates in ADP binding. Residues Thr-12, Thr-13, and Ser-14 each coordinate ATP. Thr-12 serves as a coordination point for sn-glycerol 3-phosphate. Residue Arg-16 coordinates ADP. Residues Arg-82, Glu-83, Tyr-134, and Asp-246 each coordinate sn-glycerol 3-phosphate. Positions 82, 83, 134, 246, and 247 each coordinate glycerol. Residues Thr-268 and Gly-312 each contribute to the ADP site. ATP contacts are provided by Thr-268, Gly-312, Gln-316, and Gly-413. Gly-413 and Asn-417 together coordinate ADP.

The protein belongs to the FGGY kinase family.

It carries out the reaction glycerol + ATP = sn-glycerol 3-phosphate + ADP + H(+). The protein operates within polyol metabolism; glycerol degradation via glycerol kinase pathway; sn-glycerol 3-phosphate from glycerol: step 1/1. Inhibited by fructose 1,6-bisphosphate (FBP). Its function is as follows. Key enzyme in the regulation of glycerol uptake and metabolism. Catalyzes the phosphorylation of glycerol to yield sn-glycerol 3-phosphate. This chain is Glycerol kinase, found in Pseudarthrobacter chlorophenolicus (strain ATCC 700700 / DSM 12829 / CIP 107037 / JCM 12360 / KCTC 9906 / NCIMB 13794 / A6) (Arthrobacter chlorophenolicus).